The sequence spans 204 residues: Large ribosomal subunit protein uL10 (204 aa).

Residues 170–204 (AADPSVIGGAGEASDQEPKTTETPEASAAQDNTNE) form a disordered region. The segment covering 192-204 (TPEASAAQDNTNE) has biased composition (polar residues).

Belongs to the universal ribosomal protein uL10 family. In terms of assembly, part of the ribosomal stalk of the 50S ribosomal subunit. The N-terminus interacts with L11 and the large rRNA to form the base of the stalk. The C-terminus forms an elongated spine to which L12 dimers bind in a sequential fashion forming a multimeric L10(L12)X complex.

Functionally, forms part of the ribosomal stalk, playing a central role in the interaction of the ribosome with GTP-bound translation factors. The chain is Large ribosomal subunit protein uL10 from Cutibacterium acnes (strain DSM 16379 / KPA171202) (Propionibacterium acnes).